The sequence spans 211 residues: Thymidylate kinase (211 aa).

12–19 (GIDGSGKS) lines the ATP pocket.

This sequence belongs to the thymidylate kinase family.

The enzyme catalyses dTMP + ATP = dTDP + ADP. Phosphorylation of dTMP to form dTDP in both de novo and salvage pathways of dTTP synthesis. In Ruegeria pomeroyi (strain ATCC 700808 / DSM 15171 / DSS-3) (Silicibacter pomeroyi), this protein is Thymidylate kinase.